The sequence spans 117 residues: MAVNIYDLAHDLDKGIRETPEFISLQDAYREVNENADAKAKFERFRDVQVTIQEKQMTGQEIDDETVDVAQQVAQEVQENELIVKLMEKEQAMSTIINDLNRIIMTPLQDLYNVAND.

It belongs to the UPF0342 family.

The polypeptide is UPF0342 protein lmo2223 (Listeria monocytogenes serovar 1/2a (strain ATCC BAA-679 / EGD-e)).